A 625-amino-acid chain; its full sequence is MAGDRLPRKVMDAKKLASLLRGGPGGPLVIDSRSFVEYNSWHVLSSVNICCSKLVKRRLQQGKVTIAELIQPAARSQVEATEPQDVVVYDQSTRDASVLAADSFLSILLSKLDGCFDSVAILTGGFATFSSCFPGLCEGKPAALLPMSLSQPCLPVPSVGLTRILPHLYLGSQKDVLNKDLMTQNGISYVLNASNSCPKPDFICESRFMRVPINDNYCEKLLPWLDKSIEFIDKAKLSSCQVIVHCLAGISRSATIAIAYIMKTMGMSSDDAYRFVKDRRPSISPNFNFLGQLLEYERSLKLLAALQGDPGTPSGTPEPPPSPAAGAPLPRLPPPTSESAATGNAAAREGGLSAGGEPPAPPTPPATSALQQGLRGLHLSSDRLQDTNRLKRSFSLDIKSAYAPSRRPDGPGPPDPGEAPKLCKLDSPSGAALGLSSPSPDSPDAAPEARPRPRRRPRPPAGSPARSPAHSLGLNFGDAARQTPRHGLSALSAPGLPGPGQPAGPGAWAPPLDSPGTPSPDGPWCFSPEGAQGAGGVLFAPFGRAGAPGPGGGSDLRRREAARAEPRDARTGWPEEPAPETQFKRRSCQMEFEEGMVEGRARGEELAALGKQASFSGSVEVIEVS.

One can recognise a Rhodanese domain in the interval 23 to 138 (GPGGPLVIDS…FSSCFPGLCE (116 aa)). The 143-residue stretch at 160-302 (GLTRILPHLY…LLEYERSLKL (143 aa)) folds into the Tyrosine-protein phosphatase domain. Catalysis depends on Cys-246, which acts as the Phosphocysteine intermediate. A disordered region spans residues 306-586 (LQGDPGTPSG…PAPETQFKRR (281 aa)). Positions 380–389 (SSDRLQDTNR) are enriched in basic and acidic residues. Low complexity predominate over residues 431–448 (AALGLSSPSPDSPDAAPE). The span at 555 to 570 (DLRRREAARAEPRDAR) shows a compositional bias: basic and acidic residues.

Belongs to the protein-tyrosine phosphatase family. Non-receptor class dual specificity subfamily. In terms of assembly, monomer. Abundant in brain, heart and skeletal muscle.

The protein localises to the cytoplasm. Its subcellular location is the nucleus. It catalyses the reaction O-phospho-L-tyrosyl-[protein] + H2O = L-tyrosyl-[protein] + phosphate. The catalysed reaction is O-phospho-L-seryl-[protein] + H2O = L-seryl-[protein] + phosphate. The enzyme catalyses O-phospho-L-threonyl-[protein] + H2O = L-threonyl-[protein] + phosphate. Its function is as follows. Has phosphatase activity with synthetic phosphatase substrates and negatively regulates mitogen-activated protein kinase activity, presumably by catalysing their dephosphorylation. Expected to display protein phosphatase activity toward phosphotyrosine, phosphoserine and phosphothreonine residues. This chain is Dual specificity protein phosphatase 8 (DUSP8), found in Homo sapiens (Human).